Consider the following 570-residue polypeptide: Formate--tetrahydrofolate ligase (570 aa).

65 to 72 (TPHGEGKT) lines the ATP pocket.

The protein belongs to the formate--tetrahydrofolate ligase family.

The enzyme catalyses (6S)-5,6,7,8-tetrahydrofolate + formate + ATP = (6R)-10-formyltetrahydrofolate + ADP + phosphate. The protein operates within one-carbon metabolism; tetrahydrofolate interconversion. The polypeptide is Formate--tetrahydrofolate ligase (Shewanella putrefaciens (strain CN-32 / ATCC BAA-453)).